Reading from the N-terminus, the 53-residue chain is Small, acid-soluble spore protein K (53 aa).

The tract at residues 1-53 (MGRQAEFWSESKNNSKIDGQPKAKARFASKRPNGTINTHPQERMRAANQQEEE) is disordered.

It belongs to the SspK family.

The protein resides in the spore core. The protein is Small, acid-soluble spore protein K of Bacillus cytotoxicus (strain DSM 22905 / CIP 110041 / 391-98 / NVH 391-98).